We begin with the raw amino-acid sequence, 45 residues long: Photosystem II reaction center protein K (45 aa).

Residues 1-8 constitute a propeptide that is removed on maturation; the sequence is MEAALLLA. The helical transmembrane segment at 24-44 threads the bilayer; sequence LPVIPVFFLLLAFVWQAAVGF.

This sequence belongs to the PsbK family. PSII is composed of 1 copy each of membrane proteins PsbA, PsbB, PsbC, PsbD, PsbE, PsbF, PsbH, PsbI, PsbJ, PsbK, PsbL, PsbM, PsbT, PsbX, PsbY, PsbZ, Psb30/Ycf12, peripheral proteins PsbO, CyanoQ (PsbQ), PsbU, PsbV and a large number of cofactors. It forms dimeric complexes.

The protein localises to the cellular thylakoid membrane. Functionally, one of the components of the core complex of photosystem II (PSII). PSII is a light-driven water:plastoquinone oxidoreductase that uses light energy to abstract electrons from H(2)O, generating O(2) and a proton gradient subsequently used for ATP formation. It consists of a core antenna complex that captures photons, and an electron transfer chain that converts photonic excitation into a charge separation. The sequence is that of Photosystem II reaction center protein K from Synechococcus elongatus (strain ATCC 33912 / PCC 7942 / FACHB-805) (Anacystis nidulans R2).